The chain runs to 301 residues: MQTFAEISAVRGHLKTFKREGRKIAFVPTMGNLHEGHLTLVRKAREYADIVVVSIFVNPMQFDRADDLNNYPRTLEEDLSKLTAEGVDVVFTPTPEIIYPEGLDKQTFVDVPGLSTILEGASRPGHFRGVTTIVNKLFNIVQPDVACFGEKDFQQLAVIRKMVDDLAMDIEIIGVPTVREMDGLAMSSRNGLLTLDERQRAPVLARTMRWISSAIRGGRDDYASIIEDANDQLRAAGLHPDEIFIRDARTLQVITPETTQAVILMSAFLGQARLIDNQTVDMVVESKDEAESNDGTAANAE.

Residue 30–37 participates in ATP binding; it reads MGNLHEGH. Histidine 37 acts as the Proton donor in catalysis. Residue glutamine 61 coordinates (R)-pantoate. Glutamine 61 is a binding site for beta-alanine. 149-152 is an ATP binding site; it reads GEKD. Glutamine 155 is a binding site for (R)-pantoate. Residues valine 178 and 186–189 each bind ATP; that span reads MSSR.

The protein belongs to the pantothenate synthetase family. Homodimer.

The protein localises to the cytoplasm. The catalysed reaction is (R)-pantoate + beta-alanine + ATP = (R)-pantothenate + AMP + diphosphate + H(+). It functions in the pathway cofactor biosynthesis; (R)-pantothenate biosynthesis; (R)-pantothenate from (R)-pantoate and beta-alanine: step 1/1. Functionally, catalyzes the condensation of pantoate with beta-alanine in an ATP-dependent reaction via a pantoyl-adenylate intermediate. This chain is Pantothenate synthetase, found in Vibrio parahaemolyticus serotype O3:K6 (strain RIMD 2210633).